Consider the following 283-residue polypeptide: 4-diphosphocytidyl-2-C-methyl-D-erythritol kinase (283 aa).

Lys-12 is an active-site residue. 94 to 104 is an ATP binding site; it reads PAQAGLGGGSS. The active site involves Asp-136.

This sequence belongs to the GHMP kinase family. IspE subfamily.

The enzyme catalyses 4-CDP-2-C-methyl-D-erythritol + ATP = 4-CDP-2-C-methyl-D-erythritol 2-phosphate + ADP + H(+). The protein operates within isoprenoid biosynthesis; isopentenyl diphosphate biosynthesis via DXP pathway; isopentenyl diphosphate from 1-deoxy-D-xylulose 5-phosphate: step 3/6. Catalyzes the phosphorylation of the position 2 hydroxy group of 4-diphosphocytidyl-2C-methyl-D-erythritol. The polypeptide is 4-diphosphocytidyl-2-C-methyl-D-erythritol kinase (Acidovorax sp. (strain JS42)).